The primary structure comprises 298 residues: HTH-type transcriptional regulator CzcR (298 aa).

An HTH lysR-type domain is found at 11–68 (MELRDLQIFQSVADQGSVSSAAKELNYVQSNVTARIKQLENELKTPLFYRHKRGMTLT). Residues 28-47 (VSSAAKELNYVQSNVTARIK) constitute a DNA-binding region (H-T-H motif).

It belongs to the LysR transcriptional regulatory family.

The chain is HTH-type transcriptional regulator CzcR (czcR) from Bacillus thuringiensis (strain Al Hakam).